A 346-amino-acid polypeptide reads, in one-letter code: Methylthioribose-1-phosphate isomerase (346 aa).

Substrate contacts are provided by residues 46–48, Arg89, and Gln196; that span reads RGA. Asp237 functions as the Proton donor in the catalytic mechanism. 247–248 lines the substrate pocket; that stretch reads NK.

The protein belongs to the eIF-2B alpha/beta/delta subunits family. MtnA subfamily.

The catalysed reaction is 5-(methylsulfanyl)-alpha-D-ribose 1-phosphate = 5-(methylsulfanyl)-D-ribulose 1-phosphate. It functions in the pathway amino-acid biosynthesis; L-methionine biosynthesis via salvage pathway; L-methionine from S-methyl-5-thio-alpha-D-ribose 1-phosphate: step 1/6. In terms of biological role, catalyzes the interconversion of methylthioribose-1-phosphate (MTR-1-P) into methylthioribulose-1-phosphate (MTRu-1-P). This chain is Methylthioribose-1-phosphate isomerase, found in Geotalea daltonii (strain DSM 22248 / JCM 15807 / FRC-32) (Geobacter daltonii).